The following is a 152-amino-acid chain: Superoxide dismutase [Cu-Zn] (152 aa).

Cu cation is bound by residues histidine 45, histidine 47, and histidine 62. The cysteines at positions 56 and 145 are disulfide-linked. Zn(2+) is bound by residues histidine 62, histidine 70, histidine 79, and aspartate 82. Residue histidine 119 participates in Cu cation binding.

This sequence belongs to the Cu-Zn superoxide dismutase family. As to quaternary structure, homodimer. Cu cation is required as a cofactor. It depends on Zn(2+) as a cofactor.

It is found in the cytoplasm. It catalyses the reaction 2 superoxide + 2 H(+) = H2O2 + O2. Its function is as follows. Destroys radicals which are normally produced within the cells and which are toxic to biological systems. This chain is Superoxide dismutase [Cu-Zn] (SODCC), found in Zantedeschia aethiopica (White calla lily).